We begin with the raw amino-acid sequence, 594 residues long: Lipolysis-stimulated lipoprotein receptor (594 aa).

The N-terminal stretch at 1–35 is a signal peptide; that stretch reads MAPAASACAGAPGSHPATTIFVCLFLIIYCPDRAS. Topologically, residues 36–206 are extracellular; it reads AIQVTVPDPY…PGFRAGPLED (171 aa). The 93-residue stretch at 89-181 folds into the Ig-like V-type domain; that stretch reads PASVDNQLNA…DLDGNNEAYA (93 aa). Cys113 and Cys165 are disulfide-bonded. Residues 207–227 traverse the membrane as a helical segment; sequence WLFVVVVCLASLLFFLLLGIC. At 228-594 the chain is on the cytoplasmic side; the sequence is WCQCCPHTCC…LALSRESLVV (367 aa). Position 283 is a phosphothreonine (Thr283). Ser308 carries the phosphoserine; by MAPK8 and MAPK9 modification. Ser314, Ser332, Ser375, and Ser379 each carry phosphoserine. Residues 375–387 are compositionally biased toward basic and acidic residues; it reads SEVTSLHEDDWRS. A disordered region spans residues 375–594; sequence SEVTSLHEDD…LALSRESLVV (220 aa). Phosphothreonine is present on Thr396. Phosphoserine is present on residues Ser407, Ser410, and Ser436. Positions 435–444 are enriched in basic and acidic residues; the sequence is RSVDALDDIN. The span at 445-460 shows a compositional bias: low complexity; the sequence is RPGSTESGRSSPPSSG. 2 positions are modified to phosphoserine: Ser471 and Ser473. Basic and acidic residues predominate over residues 472 to 550; that stretch reads RSRDDLYDPD…GAGERRRVYR (79 aa). At Tyr478 the chain carries Phosphotyrosine. Ser576 is modified (phosphoserine). Lys583 is covalently cross-linked (Glycyl lysine isopeptide (Lys-Gly) (interchain with G-Cter in ubiquitin)). A phosphoserine mark is found at Ser588 and Ser591.

This sequence belongs to the immunoglobulin superfamily. LISCH7 family. Homotrimer or homotetramer. Assembles into cell-cell contacts. Interacts (via the cytoplasmic domain) with MARVELD2 (via C-terminal cytoplasmic domain); the interaction is required to recruit MARVELD2 to tricellular contacts. Interacts with OCLN. Phosphorylation at Ser-308 by MAPK8/JNK1 and MAPK9/JNK2 may be required for exclusive localization at tricellular tight junstions. In terms of processing, polyubiquitinated at Lys-583 via 'Lys-63'-linked ubiquitin chains; deubiquitinated by USP53. Expressed in epithelial tissues (at protein level). Specifically expressed in liver and to a lower extent in kidney (at protein level). Also detected in brain, testis, ovaries, adrenal gland, intestine, muscle, and lung. In colon, only expressed in the lower portion of crypts. Expressed in the liver. As to expression, expressed in liver, stomach, small intestine and colon. Also detected in other epithelial tissues.

The protein resides in the cell membrane. It is found in the cell junction. It localises to the tight junction. In terms of biological role, probable role in the clearance of triglyceride-rich lipoprotein from blood. Binds chylomicrons, LDL and VLDL in presence of free fatty acids and allows their subsequent uptake in the cells. Maintains epithelial barrier function by recruiting MARVELD2/tricellulin to tricellular tight junctions. The sequence is that of Lipolysis-stimulated lipoprotein receptor from Mus musculus (Mouse).